Consider the following 952-residue polypeptide: MKYNKLLFSLLLLAVFCFSCKEEQKLQTSLDFDKVLLNAKSNPIAIESESPLFSWIIKAEGFGKSQSAYHILVASSLDKLDETHADVWNSNKVESSKSTFVKYEGKELKAATRYYWKVKVWDKSNQESNWSEPQYFQMGLLDESNWGEAKWITLTNDTRTSEYRFREYKTGRMEQPIQVDGFAASYFRNKINLNKEVDNAQVYICGLGYYEFFLNGEKVGDHVLDPAPSNYDKQAYYVNYDITEQLNSGENALGIILGNGFYGQNISWKNDPESDRDLAYGPPTVRVLLKLKYKDGTESEFFSDETWKESTGPIVFNNIYGGDTYDARFELGDWTSTNYDDSSWGFAKETAPEIKNISAQQIPAIKKLQDYEPQNVFKGSDGEWIVDFGQNIAGWVKLNVSEKEGQLIEVITTEALLTNGRDIFPGSTGGGANGMAQIYQYICKGDGQESWEPKFSYHGFRYAKIKGVSTKPDADMIKAVLVATDIQETGSFECSDDLFNKMHNISKWTIVDNVHGIPEDCPHREKCGWLGDAHAFCEYALYNYDMYDFYKKYMEDIRTQMLPTKGHNNPELKFQVPTMIAPGKRTSSYAKIDWGVATMYLPWYNYLYYGDDAIVNEYYPEMKDLTNFYLNFKGENGIMQDGMGDWCPPRWDRRTNPEAMECDPIISANAYFYDVLGIMETFAKMNNDGAFQSEMKAEKEALKDAFNKAFLVEIPNTDFKWYQSQTATVQALQFGMVPEEEIENVVNGLEYDIVEVKGGHHSTGIHGNRYIYTVLSKYGKADLAYRILTTPDFPSQTYIMNSGFTTWPERQFEWETMEGPTNSLNHPMHSGFSAYFFESLGGIKSSTKEAGYKQFIVNPEFPSQITQTKVSVPTPYGDIKNDWSFEEGKLSMTLEIPFNTEANLVLNQAELESLIINGKTFQNLQKNTKSVTLQGSNVILGSGKYKILYNKR.

An N-terminal signal peptide occupies residues 1–21; it reads MKYNKLLFSLLLLAVFCFSCK. Alpha-L-rhamnose-binding positions include D520, 524 to 525, D532, and W594; that span reads RE. The active-site Proton donor is E525. E809 serves as the catalytic Proton acceptor. Alpha-L-rhamnose is bound at residue H826.

It belongs to the glycosyl hydrolase 78 family.

Its subcellular location is the cell membrane. The catalysed reaction is Hydrolysis of terminal non-reducing alpha-L-rhamnose residues in alpha-L-rhamnosides.. Its function is as follows. Alpha-L-rhamnosidase that may be involved in ulvan degradation. Ulvan is the main polysaccharide component of the Ulvales (green seaweed) cell wall. It is composed of disaccharide building blocks comprising 3-sulfated rhamnose (Rha3S) linked to D-glucuronic acid (GlcA), L-iduronic acid (IduA), or D-xylose (Xyl). The sequence is that of Alpha-L-rhamnosidase from Formosa agariphila (strain DSM 15362 / KCTC 12365 / LMG 23005 / KMM 3901 / M-2Alg 35-1).